Reading from the N-terminus, the 292-residue chain is 4-diphosphocytidyl-2-C-methyl-D-erythritol kinase (292 aa).

Residue Lys20 is part of the active site. Position 103–113 (103–113) interacts with ATP; that stretch reads PMGGGIGGGSS. Asp145 is an active-site residue.

The protein belongs to the GHMP kinase family. IspE subfamily.

The enzyme catalyses 4-CDP-2-C-methyl-D-erythritol + ATP = 4-CDP-2-C-methyl-D-erythritol 2-phosphate + ADP + H(+). It functions in the pathway isoprenoid biosynthesis; isopentenyl diphosphate biosynthesis via DXP pathway; isopentenyl diphosphate from 1-deoxy-D-xylulose 5-phosphate: step 3/6. In terms of biological role, catalyzes the phosphorylation of the position 2 hydroxy group of 4-diphosphocytidyl-2C-methyl-D-erythritol. The protein is 4-diphosphocytidyl-2-C-methyl-D-erythritol kinase of Cupriavidus metallidurans (strain ATCC 43123 / DSM 2839 / NBRC 102507 / CH34) (Ralstonia metallidurans).